The chain runs to 254 residues: Phosphoribosylaminoimidazole-succinocarboxamide synthase (254 aa).

The protein belongs to the SAICAR synthetase family.

It carries out the reaction 5-amino-1-(5-phospho-D-ribosyl)imidazole-4-carboxylate + L-aspartate + ATP = (2S)-2-[5-amino-1-(5-phospho-beta-D-ribosyl)imidazole-4-carboxamido]succinate + ADP + phosphate + 2 H(+). The protein operates within purine metabolism; IMP biosynthesis via de novo pathway; 5-amino-1-(5-phospho-D-ribosyl)imidazole-4-carboxamide from 5-amino-1-(5-phospho-D-ribosyl)imidazole-4-carboxylate: step 1/2. The chain is Phosphoribosylaminoimidazole-succinocarboxamide synthase from Bartonella tribocorum (strain CIP 105476 / IBS 506).